The chain runs to 354 residues: NADH-quinone oxidoreductase subunit H (354 aa).

A run of 8 helical transmembrane segments spans residues 22–42 (ILIRAVIIVVPLLLCVAYLIL), 91–111 (YLIAPLMVLMPAVAVWAVIPF), 124–144 (LLYVMAISSVGVYGVILAGWA), 168–188 (MGFALVTVLMVAGSLNLSAIV), 203–223 (ILSWNWLPLLPMFGVYFISGV), 255–275 (LFFLAEYINMIIISTMTALMF), 291–311 (IPGFFWLVIKVFLLLSVFIWI), and 326–346 (LGWKVFIPLTVAWLIIVAIWI).

It belongs to the complex I subunit 1 family. In terms of assembly, NDH-1 is composed of 14 different subunits. Subunits NuoA, H, J, K, L, M, N constitute the membrane sector of the complex.

The protein resides in the cell inner membrane. It carries out the reaction a quinone + NADH + 5 H(+)(in) = a quinol + NAD(+) + 4 H(+)(out). In terms of biological role, NDH-1 shuttles electrons from NADH, via FMN and iron-sulfur (Fe-S) centers, to quinones in the respiratory chain. The immediate electron acceptor for the enzyme in this species is believed to be ubiquinone. Couples the redox reaction to proton translocation (for every two electrons transferred, four hydrogen ions are translocated across the cytoplasmic membrane), and thus conserves the redox energy in a proton gradient. This subunit may bind ubiquinone. This is NADH-quinone oxidoreductase subunit H from Cupriavidus necator (strain ATCC 17699 / DSM 428 / KCTC 22496 / NCIMB 10442 / H16 / Stanier 337) (Ralstonia eutropha).